The following is a 501-amino-acid chain: Sucrose-6-phosphate hydrolase (501 aa).

Substrate is bound by residues 44–47, Gln63, 106–107, 167–168, and Glu222; these read LLND, YT, and RD. The active site involves Asp47.

It belongs to the glycosyl hydrolase 32 family.

It carries out the reaction Hydrolysis of terminal non-reducing beta-D-fructofuranoside residues in beta-D-fructofuranosides.. It functions in the pathway glycan biosynthesis; sucrose metabolism. The sequence is that of Sucrose-6-phosphate hydrolase (scrB) from Pediococcus pentosaceus.